The chain runs to 327 residues: Phenylalanine--tRNA ligase alpha subunit (327 aa).

A Mg(2+)-binding site is contributed by Glu252.

The protein belongs to the class-II aminoacyl-tRNA synthetase family. Phe-tRNA synthetase alpha subunit type 1 subfamily. As to quaternary structure, tetramer of two alpha and two beta subunits. Mg(2+) is required as a cofactor.

It is found in the cytoplasm. The catalysed reaction is tRNA(Phe) + L-phenylalanine + ATP = L-phenylalanyl-tRNA(Phe) + AMP + diphosphate + H(+). This is Phenylalanine--tRNA ligase alpha subunit from Escherichia coli O139:H28 (strain E24377A / ETEC).